The chain runs to 699 residues: MHAIAPRLLLLFVLSGLPGTRGGSGVPGPINPPNSDVVFPGGSPVAQYCYAYPRLDDPGPLGSADAGRQDLPRRVVRHEPLGRSFLTGGLVLLAPPVRGFGAPNATYAARVTYYRLTRACRQPILLRQYGGCRGGEPPSPKTCGSYTYTYQGGGPPTRYALVNASLLVPIWDRAAETFEYQIELGGELHVGLLWVEVGGEGPGPTAPPQAARAEGGPCVPPVPAGRPWRSVPPVWYSAPNPGFRGLRFRERCLPPQTPAAPSDLPRVAFAPQSLLVGITGRTFIRMARPTEDVGVLPPHWAPGALDDGPYAPFPPRPRFRRALRTDPEGVDPDVRAPRTGRRLMALTEDTSSDSPTSAPEKTPLPVSATAMAPSVDPSAEPTAPATTTPPDEMATQAATVAVTPEETAVASPPATASVESSPLPAAAAATPGAGHTNTSSASAAKTPPTTPAPTTPPPTSTHATPRPTTPGPQTTPPGPATPGPVGASAAPTADSPLTASPPATAPGPSAANVSVAATTATPGTRGTARTPPTDPKTHPHGPADAPPGSPAPPPPEHRGGPEEFEGAGDGEPPEDDDSATGLAFRTPNPNKPPPARPGPIRPTLPPGILGPLAPNTPRPPAQAPAKDMPSGPTPQHIPLFWFLTASPALDILFIISTTIHTAAFVCLVALAAQLWRGRAGRRRYAHPSVRYVCLPPERD.

The N-terminal stretch at 1 to 22 is a signal peptide; that stretch reads MHAIAPRLLLLFVLSGLPGTRG. Residues 23–650 are Virion surface-facing; that stretch reads GSGVPGPINP…WFLTASPALD (628 aa). N-linked (GlcNAc...) asparagine; by host glycans are attached at residues asparagine 104 and asparagine 163. Disordered stretches follow at residues 302 to 390 and 403 to 632; these read PGAL…TTPP and TPEE…PSGP. The span at 323–336 shows a compositional bias: basic and acidic residues; that stretch reads LRTDPEGVDPDVRA. Residues 348-359 are compositionally biased toward polar residues; sequence EDTSSDSPTSAP. Composition is skewed to low complexity over residues 376–390 and 403–447; these read DPSA…TTPP and TPEE…AKTP. A glycan (N-linked (GlcNAc...) asparagine; by host) is linked at asparagine 437. 2 stretches are compositionally biased toward pro residues: residues 448-459 and 467-482; these read PTTPAPTTPPPT and PTTP…PATP. Residues 483–531 are compositionally biased toward low complexity; sequence GPVGASAAPTADSPLTASPPATAPGPSAANVSVAATTATPGTRGTARTP. An N-linked (GlcNAc...) asparagine; by host glycan is attached at asparagine 512. Positions 544–554 are enriched in pro residues; that stretch reads DAPPGSPAPPP. Over residues 562 to 578 the composition is skewed to acidic residues; sequence EEFEGAGDGEPPEDDDS. Residues 589–605 show a composition bias toward pro residues; that stretch reads PNKPPPARPGPIRPTLP. A helical transmembrane segment spans residues 651–671; sequence ILFIISTTIHTAAFVCLVALA. Residues 672–699 are Intravirion-facing; the sequence is AQLWRGRAGRRRYAHPSVRYVCLPPERD.

The protein belongs to the alphaherpesvirinae glycoprotein G family.

It is found in the virion membrane. Its function is as follows. Chemokine-binding protein that inhibits neutrophils' chemotaxis. This is Envelope glycoprotein G (gG) from Human herpesvirus 2 (strain HG52) (HHV-2).